The primary structure comprises 385 residues: Succinyl-diaminopimelate desuccinylase (385 aa).

H73 is a binding site for Zn(2+). Residue D75 is part of the active site. D106 lines the Zn(2+) pocket. E141 serves as the catalytic Proton acceptor. Zn(2+) is bound by residues E142, E170, and H359.

It belongs to the peptidase M20A family. DapE subfamily. Homodimer. Zn(2+) serves as cofactor. Co(2+) is required as a cofactor.

It catalyses the reaction N-succinyl-(2S,6S)-2,6-diaminopimelate + H2O = (2S,6S)-2,6-diaminopimelate + succinate. Its pathway is amino-acid biosynthesis; L-lysine biosynthesis via DAP pathway; LL-2,6-diaminopimelate from (S)-tetrahydrodipicolinate (succinylase route): step 3/3. Catalyzes the hydrolysis of N-succinyl-L,L-diaminopimelic acid (SDAP), forming succinate and LL-2,6-diaminopimelate (DAP), an intermediate involved in the bacterial biosynthesis of lysine and meso-diaminopimelic acid, an essential component of bacterial cell walls. In Methylorubrum extorquens (strain PA1) (Methylobacterium extorquens), this protein is Succinyl-diaminopimelate desuccinylase.